The following is an 876-amino-acid chain: Alanine--tRNA ligase (876 aa).

4 residues coordinate Zn(2+): H565, H569, C667, and H671.

Belongs to the class-II aminoacyl-tRNA synthetase family. It depends on Zn(2+) as a cofactor.

The protein resides in the cytoplasm. The enzyme catalyses tRNA(Ala) + L-alanine + ATP = L-alanyl-tRNA(Ala) + AMP + diphosphate. Functionally, catalyzes the attachment of alanine to tRNA(Ala) in a two-step reaction: alanine is first activated by ATP to form Ala-AMP and then transferred to the acceptor end of tRNA(Ala). Also edits incorrectly charged Ser-tRNA(Ala) and Gly-tRNA(Ala) via its editing domain. The polypeptide is Alanine--tRNA ligase (Staphylococcus saprophyticus subsp. saprophyticus (strain ATCC 15305 / DSM 20229 / NCIMB 8711 / NCTC 7292 / S-41)).